Here is a 127-residue protein sequence, read N- to C-terminus: DNA-directed RNA polymerase subunit omega (127 aa).

This sequence belongs to the RNA polymerase subunit omega family. In terms of assembly, the RNAP catalytic core consists of 2 alpha, 1 beta, 1 beta' and 1 omega subunit. When a sigma factor is associated with the core the holoenzyme is formed, which can initiate transcription.

The enzyme catalyses RNA(n) + a ribonucleoside 5'-triphosphate = RNA(n+1) + diphosphate. Functionally, promotes RNA polymerase assembly. Latches the N- and C-terminal regions of the beta' subunit thereby facilitating its interaction with the beta and alpha subunits. This chain is DNA-directed RNA polymerase subunit omega (rpoZ), found in Rickettsia prowazekii (strain Madrid E).